Reading from the N-terminus, the 142-residue chain is Sorting nexin-3 (142 aa).

The 118-residue stretch at 21–138 (NFLEIEVRNP…ASFIQDPNWD (118 aa)) folds into the PX domain. The a 1,2-diacyl-sn-glycero-3-phospho-(1D-myo-inositol-3-phosphate) site is built by R64, S66, K90, R95, and R104.

The protein belongs to the sorting nexin family.

It localises to the cytoplasm. The protein resides in the golgi apparatus membrane. It is found in the prevacuolar compartment membrane. In terms of biological role, required for retention of late Golgi membrane proteins. Component of the retrieval machinery that functions by direct interaction with the cytosolic tails of certain TGN membrane proteins during the sorting/budding process at the prevacuolar compartment. Binds phosphatidylinositol 3-phosphate (PtdIns(P3)). The protein is Sorting nexin-3 (snx3) of Aspergillus fumigatus (strain ATCC MYA-4609 / CBS 101355 / FGSC A1100 / Af293) (Neosartorya fumigata).